The chain runs to 1513 residues: DNA-directed RNA polymerase subunit beta'' (1513 aa).

Zn(2+)-binding residues include Cys220, Cys296, Cys303, and Cys306. Positions 644 to 769 are disordered; it reads RTREKDSENE…EYGNPEEDSV (126 aa). The span at 659-679 shows a compositional bias: basic and acidic residues; the sequence is NEYRTREEECKTLEDEYRTRE. A compositionally biased stretch (acidic residues) spans 680–707; the sequence is EEYETLEDEYGIPENEYETLEDEYGILE. Basic and acidic residues predominate over residues 726 to 737; the sequence is NKYRPREDKYGT. Positions 738–767 are enriched in acidic residues; it reads LEEDSEDEHGTLEEDSEEDSEDEYGNPEED.

This sequence belongs to the RNA polymerase beta' chain family. RpoC2 subfamily. In plastids the minimal PEP RNA polymerase catalytic core is composed of four subunits: alpha, beta, beta', and beta''. When a (nuclear-encoded) sigma factor is associated with the core the holoenzyme is formed, which can initiate transcription. Requires Zn(2+) as cofactor.

The protein resides in the plastid. It localises to the chloroplast. The catalysed reaction is RNA(n) + a ribonucleoside 5'-triphosphate = RNA(n+1) + diphosphate. Functionally, DNA-dependent RNA polymerase catalyzes the transcription of DNA into RNA using the four ribonucleoside triphosphates as substrates. This Oryza nivara (Indian wild rice) protein is DNA-directed RNA polymerase subunit beta''.